A 433-amino-acid polypeptide reads, in one-letter code: C2H2 type master regulator of conidiophore development brlA (433 aa).

Disordered stretches follow at residues 23–54 (PSEC…SMAS) and 238–268 (TFKS…RMSG). The segment covering 30 to 48 (TSSFSPLDSPTPTPTSLYS) has biased composition (low complexity). The segment covering 238 to 264 (TFKSHTPSTPHRSVSMGTPSGSDTPVS) has biased composition (polar residues). 2 consecutive C2H2-type zinc fingers follow at residues 321–345 (FKCK…MKSH) and 351–376 (HVCW…TKTH). The interval 391–423 (ETSQDFDPDFRGQLTPDGRPIYGSKLEDSMPDC) is disordered.

The protein localises to the nucleus. Functionally, brlA, abaA and wetA are pivotal regulators of conidiophore development and conidium maturation. They act individually and together to regulate their own expression and that of numerous other sporulation-specific genes. Binds promoters of target genes at brlA response elements (BREs) containing the conserved sequence 5'-(C/A)(A/G)AGGG(G/A)-3'. This is C2H2 type master regulator of conidiophore development brlA from Penicillium camemberti (strain FM 013).